A 206-amino-acid chain; its full sequence is MKRSKSSRRWLDEHVNDPFVKRAQKDGLRSRSSYKLIELNEKDKLIRPGMLVMDLGSAPGGWSQVAGGIVGEKGRVLATDILPMGGLDNVDFVQGDFTEDAVFQQILDMLDGRQPDLIVSDIAPNISGVAAADQAASMYLVELTLDMVRQVLKPGGNYVVKVFQGEGSDEFLKDVRSSFEKVVIRKPEASRPRSREVYLVAKGFKG.

S-adenosyl-L-methionine is bound by residues Gly60, Trp62, Asp80, Asp96, and Asp121. Catalysis depends on Lys161, which acts as the Proton acceptor.

It belongs to the class I-like SAM-binding methyltransferase superfamily. RNA methyltransferase RlmE family.

The protein localises to the cytoplasm. The enzyme catalyses uridine(2552) in 23S rRNA + S-adenosyl-L-methionine = 2'-O-methyluridine(2552) in 23S rRNA + S-adenosyl-L-homocysteine + H(+). Specifically methylates the uridine in position 2552 of 23S rRNA at the 2'-O position of the ribose in the fully assembled 50S ribosomal subunit. The polypeptide is Ribosomal RNA large subunit methyltransferase E (Stutzerimonas stutzeri (strain A1501) (Pseudomonas stutzeri)).